We begin with the raw amino-acid sequence, 150 residues long: Endoribonuclease YbeY (150 aa).

The Zn(2+) site is built by H113, H117, and H123.

Belongs to the endoribonuclease YbeY family. It depends on Zn(2+) as a cofactor.

It localises to the cytoplasm. Single strand-specific metallo-endoribonuclease involved in late-stage 70S ribosome quality control and in maturation of the 3' terminus of the 16S rRNA. This is Endoribonuclease YbeY from Syntrophotalea carbinolica (strain DSM 2380 / NBRC 103641 / GraBd1) (Pelobacter carbinolicus).